An 868-amino-acid chain; its full sequence is Pentatricopeptide repeat-containing protein At2g27610 (868 aa).

PPR repeat units follow at residues 57-91 (DRES…GMEM), 92-126 (DCSI…GFLD), 127-157 (DVSV…MKER), 158-192 (NVVT…GTQP), 193-227 (NSFT…GLDK), 228-258 (TIPV…TEVK), 259-293 (SVVT…YVRL), 294-328 (SESS…GFLF), 329-359 (DQNI…IGCV), 361-395 (NVVS…GVRP), 396-426 (NEFT…NYER), 427-457 (SSTV…IDDK), 458-492 (DIVA…GIKP), 493-528 (NEFT…RLDS), 529-559 (SLCV…QREK), 560-594 (DLVS…KVKM), 595-625 (DGVT…MVRD), and 631-661 (TKEH…MPNP). The segment at 666–741 (IWRTILAACR…EPGYSWIEVK (76 aa)) is type E motif. A type E(+) motif region spans residues 742 to 772 (NKTYSFLAGDRSHPLKDQIYMKLEDLSTRLK). The interval 773-868 (DLGYEPDTSY…DGVCSCGDFW (96 aa)) is type DYW motif.

It belongs to the PPR family. PCMP-H subfamily.

The protein is Pentatricopeptide repeat-containing protein At2g27610 (PCMP-H60) of Arabidopsis thaliana (Mouse-ear cress).